The sequence spans 223 residues: Ribosome maturation factor RimM (223 aa).

Residues 1–12 (MARRPGSSSRGP) are compositionally biased toward low complexity. Disordered stretches follow at residues 1-44 (MARR…DPGL) and 204-223 (ADPPDDLFAPPGPKPADDPG). Residues 136-210 (EDEFFLTDLI…KVVADPPDDL (75 aa)) form the PRC barrel domain.

Belongs to the RimM family. As to quaternary structure, binds ribosomal protein uS19.

Its subcellular location is the cytoplasm. In terms of biological role, an accessory protein needed during the final step in the assembly of 30S ribosomal subunit, possibly for assembly of the head region. Essential for efficient processing of 16S rRNA. May be needed both before and after RbfA during the maturation of 16S rRNA. It has affinity for free ribosomal 30S subunits but not for 70S ribosomes. In Methylorubrum extorquens (strain PA1) (Methylobacterium extorquens), this protein is Ribosome maturation factor RimM.